The sequence spans 312 residues: Ribosomal protein L11 methyltransferase (312 aa).

The S-adenosyl-L-methionine site is built by Thr-163, Gly-184, Asp-206, and Asn-248.

This sequence belongs to the methyltransferase superfamily. PrmA family.

Its subcellular location is the cytoplasm. It catalyses the reaction L-lysyl-[protein] + 3 S-adenosyl-L-methionine = N(6),N(6),N(6)-trimethyl-L-lysyl-[protein] + 3 S-adenosyl-L-homocysteine + 3 H(+). Functionally, methylates ribosomal protein L11. This is Ribosomal protein L11 methyltransferase from Clostridium botulinum (strain Hall / ATCC 3502 / NCTC 13319 / Type A).